Reading from the N-terminus, the 632-residue chain is Phosphomethylpyrimidine synthase (632 aa).

A compositionally biased stretch (polar residues) spans 1–13 (MNIRSNPDTTLPA). The segment at 1-26 (MNIRSNPDTTLPAVTTGPLPSSRKIF) is disordered. Substrate-binding positions include N221, M250, Y279, H315, 335-337 (SRG), 376-379 (DGLR), and E415. A Zn(2+)-binding site is contributed by H419. Residue Y442 coordinates substrate. H483 is a binding site for Zn(2+). 3 residues coordinate [4Fe-4S] cluster: C563, C566, and C571.

Belongs to the ThiC family. As to quaternary structure, homodimer. [4Fe-4S] cluster serves as cofactor.

It carries out the reaction 5-amino-1-(5-phospho-beta-D-ribosyl)imidazole + S-adenosyl-L-methionine = 4-amino-2-methyl-5-(phosphooxymethyl)pyrimidine + CO + 5'-deoxyadenosine + formate + L-methionine + 3 H(+). The protein operates within cofactor biosynthesis; thiamine diphosphate biosynthesis. In terms of biological role, catalyzes the synthesis of the hydroxymethylpyrimidine phosphate (HMP-P) moiety of thiamine from aminoimidazole ribotide (AIR) in a radical S-adenosyl-L-methionine (SAM)-dependent reaction. The chain is Phosphomethylpyrimidine synthase from Afipia carboxidovorans (strain ATCC 49405 / DSM 1227 / KCTC 32145 / OM5) (Oligotropha carboxidovorans).